A 65-amino-acid polypeptide reads, in one-letter code: Myosin-11 (65 aa).

The Myosin motor domain occupies 1 to 65; it reads RSGKLDAFLV…NWQWWRLFTK (65 aa).

The protein belongs to the TRAFAC class myosin-kinesin ATPase superfamily. Myosin family. Muscle myosin is a hexameric protein that consists of 2 heavy chain subunits (MHC), 2 alkali light chain subunits (MLC) and 2 regulatory light chain subunits (MLC-2).

It is found in the melanosome. The protein localises to the cytoplasm. Its subcellular location is the myofibril. Its function is as follows. Muscle contraction. This chain is Myosin-11 (MYH11), found in Sus scrofa (Pig).